Consider the following 242-residue polypeptide: ATP synthase subunit a (242 aa).

6 helical membrane-spanning segments follow: residues serine 29–tyrosine 49, phenylalanine 84–threonine 104, isoleucine 114–valine 134, phenylalanine 140–isoleucine 160, methionine 181–leucine 201, and phenylalanine 203–glutamine 223.

Belongs to the ATPase A chain family. In terms of assembly, F-type ATPases have 2 components, CF(1) - the catalytic core - and CF(0) - the membrane proton channel. CF(1) has five subunits: alpha(3), beta(3), gamma(1), delta(1), epsilon(1). CF(0) has three main subunits: a(1), b(2) and c(9-12). The alpha and beta chains form an alternating ring which encloses part of the gamma chain. CF(1) is attached to CF(0) by a central stalk formed by the gamma and epsilon chains, while a peripheral stalk is formed by the delta and b chains.

The protein localises to the cell inner membrane. Key component of the proton channel; it plays a direct role in the translocation of protons across the membrane. The protein is ATP synthase subunit a of Rickettsia peacockii (strain Rustic).